Here is a 503-residue protein sequence, read N- to C-terminus: MSARGQDIVSIIKEQIKEFGAPVSMTSVGSVIEVGDGIARIHGLSNAKYNELLEFPGGVLGIALNLEEDSVAAVILGEDSNIKEGDEVKATGRISEITVGKGMIGRVVDPLGRPLDGKGPIKAESTRPLERIAPNVVDRKSVNTPVQTGIKAIDAMIPIGRGQRELIIGDRSTGKTAIALDTIINQKGGDLVCIYVAIGQKASKVARIVALLEQYGAMEHTIVVAANSSDAVALQYLAPYAGCAIGEEFMEQGKDALVVYDDLTKHAWAYRQLSLLLRRPPGREAYPGDLFYLHSRLLERAARLNDKLGGGSLTALPIIETQAGDVSAYVPTNVISITDGQIYLEPDMFNAGIRPAVNVGISVSRVGSSAQTKAMKKVAGKLKMDMGQYRELAAFAQFGTSELDKSTRMQLERGQRVTEVLKQGQYQPVPAAKQVAILYATLNGYLDNIEVGKVRDYESGLYRFLEANFASVLTAIAKENVISADTEKTLKTALDEYKKGLVV.

Position 169-176 (169-176 (GDRSTGKT)) interacts with ATP.

This sequence belongs to the ATPase alpha/beta chains family. As to quaternary structure, F-type ATPases have 2 components, CF(1) - the catalytic core - and CF(0) - the membrane proton channel. CF(1) has five subunits: alpha(3), beta(3), gamma(1), delta(1), epsilon(1). CF(0) has three main subunits: a(1), b(2) and c(9-12). The alpha and beta chains form an alternating ring which encloses part of the gamma chain. CF(1) is attached to CF(0) by a central stalk formed by the gamma and epsilon chains, while a peripheral stalk is formed by the delta and b chains.

It is found in the cell membrane. It carries out the reaction ATP + H2O + 4 H(+)(in) = ADP + phosphate + 5 H(+)(out). Produces ATP from ADP in the presence of a proton gradient across the membrane. The alpha chain is a regulatory subunit. The sequence is that of ATP synthase subunit alpha from Dehalococcoides mccartyi (strain ATCC BAA-2100 / JCM 16839 / KCTC 5957 / BAV1).